The following is a 296-amino-acid chain: GTP cyclohydrolase FolE2 (296 aa).

This sequence belongs to the GTP cyclohydrolase IV family.

It carries out the reaction GTP + H2O = 7,8-dihydroneopterin 3'-triphosphate + formate + H(+). Its pathway is cofactor biosynthesis; 7,8-dihydroneopterin triphosphate biosynthesis; 7,8-dihydroneopterin triphosphate from GTP: step 1/1. In terms of biological role, converts GTP to 7,8-dihydroneopterin triphosphate. In Delftia acidovorans (strain DSM 14801 / SPH-1), this protein is GTP cyclohydrolase FolE2.